The following is a 190-amino-acid chain: 3-isopropylmalate dehydratase small subunit (190 aa).

The protein belongs to the LeuD family. LeuD type 1 subfamily. As to quaternary structure, heterodimer of LeuC and LeuD.

The catalysed reaction is (2R,3S)-3-isopropylmalate = (2S)-2-isopropylmalate. It participates in amino-acid biosynthesis; L-leucine biosynthesis; L-leucine from 3-methyl-2-oxobutanoate: step 2/4. Functionally, catalyzes the isomerization between 2-isopropylmalate and 3-isopropylmalate, via the formation of 2-isopropylmaleate. In Staphylococcus aureus (strain MSSA476), this protein is 3-isopropylmalate dehydratase small subunit.